The following is a 100-amino-acid chain: MARKGLIEREKKRKKLEQKYHSIRGSSKKEIRKVPSLSDKWEIHGKLQSPPRNSAPVRLHRRCFLTGRPRANYRDFGLSGHVLREMVQACLLPGATRSSW.

Positions 1–10 (MARKGLIERE) are enriched in basic and acidic residues. A disordered region spans residues 1-29 (MARKGLIEREKKRKKLEQKYHSIRGSSKK).

Belongs to the universal ribosomal protein uS14 family. As to quaternary structure, part of the 30S ribosomal subunit.

It localises to the plastid. The protein localises to the chloroplast. Binds 16S rRNA, required for the assembly of 30S particles. The sequence is that of Small ribosomal subunit protein uS14c from Acorus calamus (Sweet flag).